The following is a 463-amino-acid chain: MTTETRFLYSQLPAIDRLLRDSSFLSLRDTYGHTRVVELLRQMLDEAREVIRGSQTLPAWCENWAQEVDARLTKEAQSALRPVINLTGTVLHTNLGRALQAEAAVEAVAQAMRSPVTLEYDLDDAGRGHRDRALAQLLCRITGAEDACIVNNNAAAVLLMLAATASGKEVVVSRGELVEIGGAFRIPDVMRQAGCTLHEVGTTNRTHANDYRQAVNENTALLMKVHTSNYSIQGFTKAIDEAELVALGKELDVPVVTDLGSGSLVDLSQYGLPKEPMPQELIAAGVSLVSFSGDKLLGGPQAGIIVGKKEMIARLQSHPLKRALRADKMTLAALEATLRLYLHPEALSEKLPTLRLLTRSAEVIQIQAQRLQAPLAAHYGAEFAVQVMPCLSQIGSGSLPVDRLPSAALTFTPHDGRGSHLESLAARWRELPVPVIGRIYDGRLWLDLRCLEDEQRFLEMLLK.

Lysine 295 carries the post-translational modification N6-(pyridoxal phosphate)lysine.

Belongs to the SelA family. Homodecamer; pentamer of dimers. Binds only one seryl-tRNA(Sec) per dimer. The cofactor is pyridoxal 5'-phosphate.

It is found in the cytoplasm. The enzyme catalyses L-seryl-tRNA(Sec) + selenophosphate + H(+) = L-selenocysteinyl-tRNA(Sec) + phosphate. The protein operates within aminoacyl-tRNA biosynthesis; selenocysteinyl-tRNA(Sec) biosynthesis; selenocysteinyl-tRNA(Sec) from L-seryl-tRNA(Sec) (bacterial route): step 1/1. Converts seryl-tRNA(Sec) to selenocysteinyl-tRNA(Sec) required for selenoprotein biosynthesis. The chain is L-seryl-tRNA(Sec) selenium transferase from Escherichia coli (strain K12 / MC4100 / BW2952).